Here is a 376-residue protein sequence, read N- to C-terminus: PqqA peptide cyclase (376 aa).

A Radical SAM core domain is found at 7-222 (VGLPLWLLAE…TNEYRDKLKA (216 aa)). [4Fe-4S] cluster is bound by residues Cys-21, Cys-25, and Cys-28.

It belongs to the radical SAM superfamily. PqqE family. As to quaternary structure, interacts with PqqD. The interaction is necessary for activity of PqqE. [4Fe-4S] cluster serves as cofactor.

The catalysed reaction is [PQQ precursor protein] + S-adenosyl-L-methionine = E-Y cross-linked-[PQQ precursor protein] + 5'-deoxyadenosine + L-methionine + H(+). Its pathway is cofactor biosynthesis; pyrroloquinoline quinone biosynthesis. Catalyzes the cross-linking of a glutamate residue and a tyrosine residue in the PqqA protein as part of the biosynthesis of pyrroloquinoline quinone (PQQ). The protein is PqqA peptide cyclase of Pseudomonas putida (strain ATCC 47054 / DSM 6125 / CFBP 8728 / NCIMB 11950 / KT2440).